A 276-amino-acid polypeptide reads, in one-letter code: Phospholipid phosphatase 2 (276 aa).

Residues 1–4 (MERR) lie on the Cytoplasmic side of the membrane. The chain crosses the membrane as a helical span at residues 5–25 (WVFVLLDVLCVLVASLPFIIL). Residues 26 to 51 (TLVNAPYKRGFYCGDDSIRYPYRPDT) are Lumenal-facing. The chain crosses the membrane as a helical span at residues 52 to 72 (ITHGLMAGVIITATVILVSLG). At 73–87 (EAYLVYTDRLYSRSN) the chain is on the cytoplasmic side. A helical transmembrane segment spans residues 88 to 108 (FNNYVAAIYKVLGTFLFGAAV). At 109–161 (SQSLTDLAKYMIGRLRPSFLAVCDPDWSQVNCSGYVQLEVCRGSPANVTEARL) the chain is on the lumenal side. The tract at residues 117–125 (KYMIGRLRP) is phosphatase sequence motif I. Residues Asn-139 and Asn-155 are each glycosylated (N-linked (GlcNAc...) asparagine). The chain crosses the membrane as a helical span at residues 162-182 (SFYSGHSSFGMYCMLFLALYV). A phosphatase sequence motif II region spans residues 164–167 (YSGH). His-167 functions as the Proton donors in the catalytic mechanism. Over 183–189 (QARLCWK) the chain is Cytoplasmic. Residues 190–210 (WARLLRPTVQFFLVAFAIYVG) form a helical membrane-spanning segment. The Lumenal portion of the chain corresponds to 211-218 (YTRVSDHK). Residues 212–223 (TRVSDHKHHWSD) are phosphatase sequence motif III. Residue His-219 is the Nucleophile of the active site. Residues 219-239 (HHWSDVLVGLLQGALVACLTV) traverse the membrane as a helical segment. The Cytoplasmic segment spans residues 240 to 276 (RYVSDFFKSRPPQPCQEDEVPERKPSLSLTLTLGDRP). Residues 251 to 276 (PQPCQEDEVPERKPSLSLTLTLGDRP) are disordered.

The protein belongs to the PA-phosphatase related phosphoesterase family. Forms functional homodimers and homooligomers. Can also form heterooligomers with PLPP1 and PLPP3. N-glycosylated. In terms of tissue distribution, expressed at high levels in lung, liver and kidney; at low levels in heart and brain, and was not detected in skeletal muscle.

It localises to the membrane. Its subcellular location is the cell membrane. The protein resides in the early endosome membrane. It is found in the endoplasmic reticulum membrane. It catalyses the reaction a 1,2-diacyl-sn-glycero-3-phosphate + H2O = a 1,2-diacyl-sn-glycerol + phosphate. The catalysed reaction is 1,2-dihexadecanoyl-sn-glycero-3-phosphate + H2O = 1,2-dihexadecanoyl-sn-glycerol + phosphate. The enzyme catalyses 1,2-di-(9Z-octadecenoyl)-sn-glycero-3-phosphate + H2O = 1,2-di-(9Z-octadecenoyl)-sn-glycerol + phosphate. It carries out the reaction a monoacyl-sn-glycero-3-phosphate + H2O = a monoacylglycerol + phosphate. It catalyses the reaction (9Z)-octadecenoyl-sn-glycero-3-phosphate + H2O = (9Z-octadecenoyl)-glycerol + phosphate. The catalysed reaction is sphing-4-enine 1-phosphate + H2O = sphing-4-enine + phosphate. The enzyme catalyses an N-acylsphing-4-enine 1-phosphate + H2O = an N-acylsphing-4-enine + phosphate. It carries out the reaction N-(octanoyl)-sphing-4-enine-1-phosphate + H2O = N-octanoylsphing-4-enine + phosphate. It catalyses the reaction N-(9Z-octadecenoyl)-ethanolamine phosphate + H2O = N-(9Z-octadecenoyl) ethanolamine + phosphate. It functions in the pathway lipid metabolism; phospholipid metabolism. Magnesium-independent phospholipid phosphatase. Insensitive to N-ethylmaleimide. In terms of biological role, magnesium-independent phospholipid phosphatase that catalyzes the dephosphorylation of a variety of glycerolipid and sphingolipid phosphate esters including phosphatidate/PA, lysophosphatidate/LPA, sphingosine 1-phosphate/S1P and ceramide 1-phosphate/C1P. Has no apparent extracellular phosphatase activity and therefore most probably acts intracellularly. Also acts on N-oleoyl ethanolamine phosphate/N-(9Z-octadecenoyl)-ethanolamine phosphate, a potential physiological compound. Through dephosphorylation of these bioactive lipid mediators produces new bioactive compounds and may regulate signal transduction in different cellular processes. Indirectly regulates, for instance, cell cycle G1/S phase transition through its phospholipid phosphatase activity. The sequence is that of Phospholipid phosphatase 2 from Mus musculus (Mouse).